Reading from the N-terminus, the 266-residue chain is Probable septum site-determining protein MinC (266 aa).

The segment at 98 to 146 (ILKGGRPVSDVDVPKVEPESPPAEEKKKTGKATKASGKSDEIGETDSPQ) is disordered. Over residues 109–124 (DVPKVEPESPPAEEKK) the composition is skewed to basic and acidic residues.

This sequence belongs to the MinC family. Interacts with MinD and FtsZ.

In terms of biological role, cell division inhibitor that blocks the formation of polar Z ring septums. Rapidly oscillates between the poles of the cell to destabilize FtsZ filaments that have formed before they mature into polar Z rings. Prevents FtsZ polymerization. The polypeptide is Probable septum site-determining protein MinC (Allorhizobium ampelinum (strain ATCC BAA-846 / DSM 112012 / S4) (Agrobacterium vitis (strain S4))).